Consider the following 327-residue polypeptide: CREB homolog crh-1 (327 aa).

Residues 16–75 (SPLMMLLFKALQEGGDSEDEARRRREQLNRRPSYRMILKDLETADKVMKKEPEETPPSSV) enclose the KID domain. Disordered stretches follow at residues 27-114 (QEGG…SPYG) and 151-200 (KVFP…VQSL). Positions 35–44 (EARRRREQLN) are enriched in basic and acidic residues. Ser-48 bears the Phosphoserine mark. Basic and acidic residues predominate over residues 52–68 (ILKDLETADKVMKKEPE). Polar residues predominate over residues 71–84 (PPSSVDASPLQFQS). Gly residues predominate over residues 161 to 172 (GLGGGGGGGGVP). Positions 173–199 (GPSSGIAGMSVQPPTSSTPSQQQSVQS) are enriched in low complexity. A bZIP domain is found at 266–317 (NRKRQVRLLKNREAAKECRRKKKEYVKCLENRVSVLENQNKALIEELKTLKE). The interval 267 to 292 (RKRQVRLLKNREAAKECRRKKKEYVK) is basic motif. Residues 284–318 (RRKKKEYVKCLENRVSVLENQNKALIEELKTLKEL) are a coiled coil. The segment at 294 to 315 (LENRVSVLENQNKALIEELKTL) is leucine-zipper.

The protein belongs to the bZIP family. As to quaternary structure, interacts with CREB-regulated transcription coactivator homolog crtc-1. Transcriptional activity is enhanced by phosphorylation. Phosphorylated by cmk-1. In terms of tissue distribution, expressed widely, including in head neurons AFD, gustatory neurons ASE, the olfactory neurons AWC, and in the ASI sensory neurons, as well as in the intestine and gonads in hermaphrodites.

It is found in the nucleus. Its function is as follows. Transcription factor. Transcriptional activity probably positively regulated by phosphorylation. Modulates expression of target genes, acting by binding to regulatory cAMP response elements (CRE). Acts downstream of the calcium-triggered CaMKK-CaMK1 signaling cascade, consisting of the protein kinase kinase ckk-1 and the protein kinase cmk-1. Plays a role in learning and memory, feeding behavior, stress response, entry into the dauer stage and modulation of lifespan. Involved in commitment to the developmentally arrested larval state known as dauer, acting by positively regulating the expression of dauer-inhibiting TGF-beta-like daf-7 in the ASI neurons. Plays a role in both associative and non-associative long-term memory (LTM). Involved in modulating feeding behavior, acting by regulating transcription of tryptophan hydroxylase tph-1 in serotonergic ADF neurons. Regulates transcription of genes involved in endoplasmic reticulum (ER) stress. Involved in modulation of lifespan, in response to raised temperature, but independently of the heat-shock response pathway, acting by regulating transcription of FMRFamide-like neuropeptides flp-6 in the AFD neuron. Functionally, plays a role in associative long-term memory (LTM) and learning. In terms of biological role, plays a role in associative long-term memory (LTM) and learning; perhaps required at the time of acquisition and/or the consolidation phase of memory formation. The sequence is that of CREB homolog crh-1 from Caenorhabditis elegans.